The sequence spans 274 residues: 4-diphosphocytidyl-2-C-methyl-D-erythritol kinase (274 aa).

Lys14 is an active-site residue. 94–104 provides a ligand contact to ATP; it reads PMQAGLGGGSS. Asp134 is an active-site residue.

This sequence belongs to the GHMP kinase family. IspE subfamily.

It carries out the reaction 4-CDP-2-C-methyl-D-erythritol + ATP = 4-CDP-2-C-methyl-D-erythritol 2-phosphate + ADP + H(+). It participates in isoprenoid biosynthesis; isopentenyl diphosphate biosynthesis via DXP pathway; isopentenyl diphosphate from 1-deoxy-D-xylulose 5-phosphate: step 3/6. In terms of biological role, catalyzes the phosphorylation of the position 2 hydroxy group of 4-diphosphocytidyl-2C-methyl-D-erythritol. In Thermosipho melanesiensis (strain DSM 12029 / CIP 104789 / BI429), this protein is 4-diphosphocytidyl-2-C-methyl-D-erythritol kinase.